The following is an 82-amino-acid chain: Putative membrane protein insertion efficiency factor (82 aa).

Belongs to the UPF0161 family.

The protein resides in the cell inner membrane. Its function is as follows. Could be involved in insertion of integral membrane proteins into the membrane. The sequence is that of Putative membrane protein insertion efficiency factor from Rickettsia felis (strain ATCC VR-1525 / URRWXCal2) (Rickettsia azadi).